Consider the following 166-residue polypeptide: Large ribosomal subunit protein uL10 (166 aa).

This sequence belongs to the universal ribosomal protein uL10 family. Part of the ribosomal stalk of the 50S ribosomal subunit. The N-terminus interacts with L11 and the large rRNA to form the base of the stalk. The C-terminus forms an elongated spine to which L12 dimers bind in a sequential fashion forming a multimeric L10(L12)X complex.

Functionally, forms part of the ribosomal stalk, playing a central role in the interaction of the ribosome with GTP-bound translation factors. In Aeromonas hydrophila subsp. hydrophila (strain ATCC 7966 / DSM 30187 / BCRC 13018 / CCUG 14551 / JCM 1027 / KCTC 2358 / NCIMB 9240 / NCTC 8049), this protein is Large ribosomal subunit protein uL10.